Here is a 107-residue protein sequence, read N- to C-terminus: NADH-quinone oxidoreductase subunit K (107 aa).

Helical transmembrane passes span 11–31, 36–56, and 67–87; these read LTHY…GVLL, IVLL…FVAF, and IMVF…LALA.

The protein belongs to the complex I subunit 4L family. In terms of assembly, NDH-1 is composed of 14 different subunits. Subunits NuoA, H, J, K, L, M, N constitute the membrane sector of the complex.

The protein resides in the cell inner membrane. It carries out the reaction a quinone + NADH + 5 H(+)(in) = a quinol + NAD(+) + 4 H(+)(out). Functionally, NDH-1 shuttles electrons from NADH, via FMN and iron-sulfur (Fe-S) centers, to quinones in the respiratory chain. The immediate electron acceptor for the enzyme in this species is believed to be ubiquinone. Couples the redox reaction to proton translocation (for every two electrons transferred, four hydrogen ions are translocated across the cytoplasmic membrane), and thus conserves the redox energy in a proton gradient. This Bdellovibrio bacteriovorus (strain ATCC 15356 / DSM 50701 / NCIMB 9529 / HD100) protein is NADH-quinone oxidoreductase subunit K.